We begin with the raw amino-acid sequence, 362 residues long: Sulfate/thiosulfate import ATP-binding protein CysA (362 aa).

Positions 3–237 (IEINNISKYF…PASRFVMEFL (235 aa)) constitute an ABC transporter domain. 35–42 (GPSGSGKT) contributes to the ATP binding site.

The protein belongs to the ABC transporter superfamily. Sulfate/tungstate importer (TC 3.A.1.6) family. The complex is composed of two ATP-binding proteins (CysA), two transmembrane proteins (CysT and CysW) and a solute-binding protein (CysP).

The protein localises to the cell inner membrane. The enzyme catalyses sulfate(out) + ATP + H2O = sulfate(in) + ADP + phosphate + H(+). It carries out the reaction thiosulfate(out) + ATP + H2O = thiosulfate(in) + ADP + phosphate + H(+). Its function is as follows. Part of the ABC transporter complex CysAWTP involved in sulfate/thiosulfate import. Responsible for energy coupling to the transport system. The protein is Sulfate/thiosulfate import ATP-binding protein CysA of Photorhabdus laumondii subsp. laumondii (strain DSM 15139 / CIP 105565 / TT01) (Photorhabdus luminescens subsp. laumondii).